A 228-amino-acid chain; its full sequence is 2,3-bisphosphoglycerate-dependent phosphoglycerate mutase (228 aa).

Residues 8-15 (RHGQSEWN), 21-22 (TG), Arg-60, 87-90 (ERHY), Lys-98, 114-115 (RR), and 183-184 (GN) contribute to the substrate site. His-9 serves as the catalytic Tele-phosphohistidine intermediate. The active-site Proton donor/acceptor is Glu-87.

The protein belongs to the phosphoglycerate mutase family. BPG-dependent PGAM subfamily.

It catalyses the reaction (2R)-2-phosphoglycerate = (2R)-3-phosphoglycerate. The protein operates within carbohydrate degradation; glycolysis; pyruvate from D-glyceraldehyde 3-phosphate: step 3/5. Catalyzes the interconversion of 2-phosphoglycerate and 3-phosphoglycerate. The chain is 2,3-bisphosphoglycerate-dependent phosphoglycerate mutase from Staphylococcus aureus (strain Mu3 / ATCC 700698).